The following is a 241-amino-acid chain: Xyloglucan-specific endo-beta-1,4-glucanase 1 (241 aa).

A signal peptide spans 1 to 19; it reads MKGFFAGVVAAATLAVASA. The active site involves Glu-136. Asn-174 and Asn-190 each carry an N-linked (GlcNAc...) asparagine glycan. The active site involves Glu-222.

It belongs to the glycosyl hydrolase 12 (cellulase H) family. Interacts with host apoplastic glucanase inhibitor GIP1.

It localises to the secreted. It is found in the host. The catalysed reaction is xyloglucan + H2O = xyloglucan oligosaccharides.. Its activity is regulated as follows. The xyloglucanase activity is inhibited by the binding of the host apoplastic glucanase inhibitor GIP1. Its function is as follows. Glycoside hydrolase that exhibits xyloglucanase activity. Acts as an important virulence factor during P.sojae infection but also acts as a pathogen-associated molecular pattern (PAMP) in soybean and solanaceous species, where it can trigger defense responses including cell death. XEG1-induced cell death can be suppressed by P.sojae RxLR effectors. The PAMP activity is independent of its xyloglucanase activity. XEG1 induces plant defense responses in a RLP kinase Serk3/Bak1-dependent manner in Nicotiana benthamiana. Moreover, the perception of XEG1 occurs independently of the perception of ethylene-inducing xylanase Eix2 in Tomato. With truncated paralog XLP1, is required to elevate apoplastic sugar during P.sojae infection. The polypeptide is Xyloglucan-specific endo-beta-1,4-glucanase 1 (Phytophthora sojae (strain P6497) (Soybean stem and root rot agent)).